Reading from the N-terminus, the 450-residue chain is Aspartyl/glutamyl-tRNA(Asn/Gln) amidotransferase subunit B (450 aa).

Belongs to the GatB/GatE family. GatB subfamily. In terms of assembly, heterotrimer of A, B and C subunits.

It carries out the reaction L-glutamyl-tRNA(Gln) + L-glutamine + ATP + H2O = L-glutaminyl-tRNA(Gln) + L-glutamate + ADP + phosphate + H(+). The catalysed reaction is L-aspartyl-tRNA(Asn) + L-glutamine + ATP + H2O = L-asparaginyl-tRNA(Asn) + L-glutamate + ADP + phosphate + 2 H(+). Functionally, allows the formation of correctly charged Asn-tRNA(Asn) or Gln-tRNA(Gln) through the transamidation of misacylated Asp-tRNA(Asn) or Glu-tRNA(Gln) in organisms which lack either or both of asparaginyl-tRNA or glutaminyl-tRNA synthetases. The reaction takes place in the presence of glutamine and ATP through an activated phospho-Asp-tRNA(Asn) or phospho-Glu-tRNA(Gln). The chain is Aspartyl/glutamyl-tRNA(Asn/Gln) amidotransferase subunit B from Methanobrevibacter smithii (strain ATCC 35061 / DSM 861 / OCM 144 / PS).